Consider the following 449-residue polypeptide: Chromosomal replication initiator protein DnaA (449 aa).

The domain I, interacts with DnaA modulators stretch occupies residues 1-69; the sequence is MEKVWLEAQS…VEAISSLTSV (69 aa). The interval 69 to 112 is domain II; that stretch reads VKYQIEFKITEKIPLESKPVDNFTPVIKDNEPSKETNKNIDITA. The segment at 113 to 329 is domain III, AAA+ region; that stretch reads NLNPKYTFDS…GMLIRLGAYA (217 aa). Glycine 157, glycine 159, lysine 160, and threonine 161 together coordinate ATP. The segment at 330-449 is domain IV, binds dsDNA; sequence SLTGSEITLN…VENLKKELIT (120 aa).

The protein belongs to the DnaA family. Oligomerizes as a right-handed, spiral filament on DNA at oriC.

The protein localises to the cytoplasm. Its function is as follows. Plays an essential role in the initiation and regulation of chromosomal replication. ATP-DnaA binds to the origin of replication (oriC) to initiate formation of the DNA replication initiation complex once per cell cycle. Binds the DnaA box (a 9 base pair repeat at the origin) and separates the double-stranded (ds)DNA. Forms a right-handed helical filament on oriC DNA; dsDNA binds to the exterior of the filament while single-stranded (ss)DNA is stabiized in the filament's interior. The ATP-DnaA-oriC complex binds and stabilizes one strand of the AT-rich DNA unwinding element (DUE), permitting loading of DNA polymerase. After initiation quickly degrades to an ADP-DnaA complex that is not apt for DNA replication. Binds acidic phospholipids. The protein is Chromosomal replication initiator protein DnaA of Geotalea uraniireducens (strain Rf4) (Geobacter uraniireducens).